Here is a 384-residue protein sequence, read N- to C-terminus: uncharacterized protein (384 aa).

Over residues 327 to 339 (KKEKKEKKEKKPK) the composition is skewed to basic residues. The tract at residues 327-358 (KKEKKEKKEKKPKKAVEEEPKQYLTPEFVNDD) is disordered.

This is an uncharacterized protein from Magallana gigas (Pacific oyster).